The chain runs to 151 residues: Large ribosomal subunit protein bL9 (151 aa).

It belongs to the bacterial ribosomal protein bL9 family.

Its function is as follows. Binds to the 23S rRNA. The chain is Large ribosomal subunit protein bL9 from Prochlorococcus marinus (strain AS9601).